Here is a 275-residue protein sequence, read N- to C-terminus: Large ribosomal subunit protein uL2 (275 aa).

Polar residues predominate over residues 35–49 (DSQSSTAGRNNNGRI). Disordered stretches follow at residues 35–59 (DSQSSTAGRNNNGRITTRHKGGGHK) and 224–275 (AMNP…RHKR). Positions 50 to 59 (TTRHKGGGHK) are enriched in basic residues.

The protein belongs to the universal ribosomal protein uL2 family. Part of the 50S ribosomal subunit. Forms a bridge to the 30S subunit in the 70S ribosome.

One of the primary rRNA binding proteins. Required for association of the 30S and 50S subunits to form the 70S ribosome, for tRNA binding and peptide bond formation. It has been suggested to have peptidyltransferase activity; this is somewhat controversial. Makes several contacts with the 16S rRNA in the 70S ribosome. This chain is Large ribosomal subunit protein uL2, found in Burkholderia orbicola (strain AU 1054).